A 333-amino-acid polypeptide reads, in one-letter code: Transcription factor TGA2.2 (333 aa).

Polar residues predominate over residues 1-14 (MADASSRTDTSTVL). A disordered region spans residues 1–48 (MADASSRTDTSTVLDTDDKNQMVDGQSGAIVPSNSSDRSDRSDKPMDQ). A compositionally biased stretch (basic and acidic residues) spans 37–48 (DRSDRSDKPMDQ). In terms of domain architecture, bZIP spans 47-91 (DQKVLRRLAQNREAARKSRLRKKAYVQQLESSKLKLASLEQEINK). Residues 49–69 (KVLRRLAQNREAARKSRLRKK) form a basic motif region. The leucine-zipper stretch occupies residues 75 to 89 (LESSKLKLASLEQEI). Residues 114–330 (AMTFDLEYAR…RALSSLWLAR (217 aa)) form the DOG1 domain.

It belongs to the bZIP family. In terms of assembly, interacts with NPR1/NH1. Interacts with NPR3/NH3.

It is found in the nucleus. Functionally, transcriptional regulator involved in defense response. The sequence is that of Transcription factor TGA2.2 from Oryza sativa subsp. japonica (Rice).